The primary structure comprises 131 residues: Large ribosomal subunit protein bL17 (131 aa).

The protein belongs to the bacterial ribosomal protein bL17 family. In terms of assembly, part of the 50S ribosomal subunit. Contacts protein L32.

This is Large ribosomal subunit protein bL17 from Thermotoga maritima (strain ATCC 43589 / DSM 3109 / JCM 10099 / NBRC 100826 / MSB8).